The following is a 172-amino-acid chain: MTVVVISGPPGSGKSTVAKKLASELGLRFVSAGSVFRKLAEEIGVSLLELNEMALKDPEIDLRIDRMVLEEARRGNVVIEAHLGGWVAAPYADVNVYLTAPLEERAKRIARRDGISYEEALEEILSREEVQWIRFRKLYGFDVASLEIFDLVVNTALMGPEAVVETIKRMLL.

8–16 (GPPGSGKST) is an ATP binding site.

The protein belongs to the cytidylate kinase family. Type 2 subfamily.

The protein localises to the cytoplasm. It carries out the reaction CMP + ATP = CDP + ADP. The catalysed reaction is dCMP + ATP = dCDP + ADP. This is Cytidylate kinase from Ignicoccus hospitalis (strain KIN4/I / DSM 18386 / JCM 14125).